Reading from the N-terminus, the 475-residue chain is B-type cell cycle switch protein ccs52A (475 aa).

The interval 1 to 29 (MDGTGNRNPPPTSTVGDNSPPPEPSPESL) is disordered. A PEST motif motif is present at residues 7–28 (RNPPPTSTVGDNSPPPEPSPES). Residues Ser43 and Ser45 each carry the phosphoserine modification. Residues 51–57 (DRFIPSR) carry the C-box motif. Positions 80-91 (AYTTLLRTALFG) match the CSM motif motif. Thr99 carries the post-translational modification Phosphothreonine. Phosphoserine is present on residues Ser144 and Ser155. 7 WD repeats span residues 166-203 (QDDF…VTKL), 207-246 (GVDD…KIRS), 249-289 (GHRL…SKLS), 290-329 (GHKS…PVLK), 332-374 (EHTA…HLSC), 376-417 (DTGS…KLAT), and 420-459 (GHTY…KSQN). Ser454 bears the Phosphoserine mark.

Belongs to the WD repeat CDC20/Fizzy family. In terms of tissue distribution, mostly expressed in nodules, and, to a lower extent, in root tips, stems, hypocotyls, leaves, flower buds and flowers.

It is found in the nucleus. Its pathway is protein modification; protein ubiquitination. Its function is as follows. Component of the anaphase promoting complex/cyclosome (APC/C), a cell cycle-regulated E3 ubiquitin-protein ligase complex that controls progression through mitosis and the G1 phase of the cell cycle. Required to switch form cell proliferation to cell differentiation, endoreduplication and ploidy-dependent cell enlargement, including during nodulation, before nodule differentiation. Involved in root-knot nematode Meloidogyne incognita giant cells formation. The sequence is that of B-type cell cycle switch protein ccs52A from Medicago truncatula (Barrel medic).